A 134-amino-acid chain; its full sequence is uncharacterized protein (134 aa).

2 consecutive transmembrane segments (helical) span residues 49–69 (VAVPAVLVLAPFWLIPTSLDV) and 71–91 (LSMTLPILIPFVYFSHALNKV).

Its subcellular location is the cell membrane. This is an uncharacterized protein from Mycobacterium tuberculosis (strain ATCC 25618 / H37Rv).